Reading from the N-terminus, the 178-residue chain is Cytidylate kinase 2 (178 aa).

An ATP-binding site is contributed by G7 to T15.

This sequence belongs to the cytidylate kinase family. Type 2 subfamily.

It localises to the cytoplasm. The catalysed reaction is CMP + ATP = CDP + ADP. The enzyme catalyses dCMP + ATP = dCDP + ADP. This chain is Cytidylate kinase 2, found in Borreliella afzelii (strain PKo) (Borrelia afzelii).